Reading from the N-terminus, the 187-residue chain is GTP cyclohydrolase 1 (187 aa).

Residues Cys-76, His-79, and Cys-148 each contribute to the Zn(2+) site.

The protein belongs to the GTP cyclohydrolase I family. Toroid-shaped homodecamer, composed of two pentamers of five dimers.

It catalyses the reaction GTP + H2O = 7,8-dihydroneopterin 3'-triphosphate + formate + H(+). The protein operates within cofactor biosynthesis; 7,8-dihydroneopterin triphosphate biosynthesis; 7,8-dihydroneopterin triphosphate from GTP: step 1/1. This chain is GTP cyclohydrolase 1, found in Streptococcus agalactiae serotype Ia (strain ATCC 27591 / A909 / CDC SS700).